The sequence spans 258 residues: MSKRNAVTTFFTNRVTKALGMTLALMMTCQSAMASLAVDQTRYIFRGDKDALTITVTNNDKERTFGGQAWVDNIVEKDTRPTFVVTPSFFKVKPNGQQTLRIIMASDHLPKDKESVYWLNLQDIPPALEGSGIAVALRTKLKLFYRPKALLEGRKGAEEGISLQSRPDGRTMLVNTTPYIFAIGSLLDGNGKKIATDNGTTQKLLMFMPGDEVQVKGNVVKVDSLNDYGELQTWTINKKKPAAPEAAKAEKADTAEQK.

Positions 1-34 (MSKRNAVTTFFTNRVTKALGMTLALMMTCQSAMA) are cleaved as a signal peptide. Residues 239 to 258 (KKPAAPEAAKAEKADTAEQK) form a disordered region. The segment covering 247 to 258 (AKAEKADTAEQK) has biased composition (basic and acidic residues).

It belongs to the periplasmic pilus chaperone family.

Its subcellular location is the periplasm. In terms of biological role, mediates assembly of pili by forming soluble multimeric complexes with pili subunits as an intermediate step in the assembly process. This protein is involved in K88 pili assembly. Protects pilin protein from proteolytic degradation by DegP and from premature polymerization. In Escherichia coli, this protein is Chaperone protein FaeE (faeE).